We begin with the raw amino-acid sequence, 1208 residues long: Defective chorion protein, FC125 isoform (1208 aa).

Residues 1-19 form the signal peptide; the sequence is MRLFSLLPLLALLVVQAAG. Disordered stretches follow at residues 23–60, 184–212, and 268–294; these read VTSD…PSIN, APAP…PDAP, and PAQP…EDPY. The span at 32-41 shows a compositional bias: polar residues; that stretch reads AGSTTNSTTD. Low complexity predominate over residues 268-280; it reads PAQPAAAGTDAQA. 5 consecutive repeat copies span residues 493-518, 519-544, 545-570, 571-596, and 597-622. Positions 493–788 are 12 X 26 AA approximate tandem repeats, Glu, Met-rich; it reads QNPMMMQQRQ…IQQQQRQMMQ (296 aa). The stretch at 623–652 is one 6; approximate repeat; it reads QNPMMMQQRQWSEEQAKIQHDQQMAQQMAQ. Residues 653–680 form a 7; approximate repeat; the sequence is QGLMMTEQRQRQWSEDQAKIQQAQQMAQ. The stretch at 681-696 is one 8; approximate repeat; that stretch reads QTPMMMPQMQQRQWTE. The stretch at 697-720 is one 9; approximate repeat; that stretch reads DPQMVQQMQQRQWAEDQTRMQMAQ. The 10; approximate repeat unit spans residues 721-733; the sequence is QNPMMQQQRQMAE. The stretch at 734-758 is one 11; approximate repeat; sequence NPQMMQQRQWSEEQTKIEQAQQMAQ. Residues 759–788 form a 12; approximate repeat; that stretch reads QNQMMMQQMQQRQWSEDQAQIQQQQRQMMQ. The segment covering 828–839 has biased composition (acidic residues); it reads EDEDNKAEDDLV. Disordered stretches follow at residues 828-875, 944-1010, and 1114-1208; these read EDED…SKSA, RTIN…GSIF, and VQPP…DVDD. Over residues 957-977 the composition is skewed to polar residues; the sequence is SESQKSNSNPPTTLTPAPQEQ. 2 stretches are compositionally biased toward acidic residues: residues 1163-1178 and 1194-1208; these read PEPD…EPSE and NDID…DVDD.

Its subcellular location is the secreted. In terms of biological role, required for proper assembly of the eggshell. This is Defective chorion protein, FC125 isoform from Drosophila melanogaster (Fruit fly).